The chain runs to 338 residues: MNVFYDKDADLSLIKGKQVTIIGYGSQGHAHALNLKDSGVNVTVGLRKGGASWSKAENAGLAVKEVAEAVKGADVVMMLLPDEQIADVYAKEVHANIKQGAALAFAHGFNVHYGQVIPRADLDVIMIAPKAPGHTVRGTYSQGGGVPHLIAVAQNKSGAARDIALSYAAANGGGRAGIIETNFREETETDLFGEQAVLCGGTVELIKAGFETLVEAGYAPEMAYFECLHELKLIVDLIYEGGIANMNYSISNNAEYGEYVTGPRVVTEETKKAMKQCLTDIQTGEYAKSFILENKAAAPTLQSRRRLTAEHQIEQVGAKLRAMMPWIAKNKLVDQTKN.

Residues 1–181 (MNVFYDKDAD…GGGRAGIIET (181 aa)) form the KARI N-terminal Rossmann domain. NADP(+)-binding positions include 24–27 (YGSQ), Arg47, and Ser52. His107 is a catalytic residue. Gly133 lines the NADP(+) pocket. A KARI C-terminal knotted domain is found at 182 to 327 (NFREETETDL…AKLRAMMPWI (146 aa)). Mg(2+) contacts are provided by Asp190, Glu194, Glu226, and Glu230. Ser251 lines the substrate pocket.

It belongs to the ketol-acid reductoisomerase family. It depends on Mg(2+) as a cofactor.

The enzyme catalyses (2R)-2,3-dihydroxy-3-methylbutanoate + NADP(+) = (2S)-2-acetolactate + NADPH + H(+). The catalysed reaction is (2R,3R)-2,3-dihydroxy-3-methylpentanoate + NADP(+) = (S)-2-ethyl-2-hydroxy-3-oxobutanoate + NADPH + H(+). The protein operates within amino-acid biosynthesis; L-isoleucine biosynthesis; L-isoleucine from 2-oxobutanoate: step 2/4. Its pathway is amino-acid biosynthesis; L-valine biosynthesis; L-valine from pyruvate: step 2/4. Involved in the biosynthesis of branched-chain amino acids (BCAA). Catalyzes an alkyl-migration followed by a ketol-acid reduction of (S)-2-acetolactate (S2AL) to yield (R)-2,3-dihydroxy-isovalerate. In the isomerase reaction, S2AL is rearranged via a Mg-dependent methyl migration to produce 3-hydroxy-3-methyl-2-ketobutyrate (HMKB). In the reductase reaction, this 2-ketoacid undergoes a metal-dependent reduction by NADPH to yield (R)-2,3-dihydroxy-isovalerate. The protein is Ketol-acid reductoisomerase (NADP(+)) of Burkholderia multivorans (strain ATCC 17616 / 249).